Reading from the N-terminus, the 668-residue chain is Break repair meiotic recombinase recruitment factor 1 (668 aa).

Disordered regions lie at residues 1–142 (MTKR…AQSP), 155–333 (LQEA…GCSS), 349–465 (LEER…GGQN), 482–521 (VLEH…HSAD), and 642–668 (LGGK…WREL). Basic and acidic residues predominate over residues 114 to 125 (TRKEEMKDEDRG). Residues 166–180 (QADSARPEQSSQSPV) show a composition bias toward polar residues. Positions 208–251 (SQDHLSEQGADDSKPETDRVPGDGGQKEHLPSIDSEGEKPDRGA) are enriched in basic and acidic residues. The span at 279–296 (TPASAPTSGPAPGLGPAS) shows a compositional bias: low complexity. Residues 305-316 (AQGSPDPQQTPS) show a composition bias toward polar residues. Phosphoserine is present on Ser370. Positions 391–400 (TGETTGESGE) are enriched in low complexity.

In terms of assembly, interacts with HSF2BP (via N-terminus) and BRCA2; the interaction with HSF2BP is direct and allows the formation of a ternary complex. The complex BRME1:HSF2BP:BRCA2 interacts with SPATA22, MEIOB and RAD51.

It localises to the chromosome. Functionally, meiotic recombination factor component of recombination bridges involved in meiotic double-strand break repair. Modulates the localization of recombinases DMC1:RAD51 to meiotic double-strand break (DSB) sites through the interaction with and stabilization of the BRCA2:HSF2BP complex during meiotic recombination. Indispensable for the DSB repair, homologous synapsis, and crossover formation that are needed for progression past metaphase I, is essential for spermatogenesis and male fertility. This is Break repair meiotic recombinase recruitment factor 1 from Homo sapiens (Human).